Consider the following 454-residue polypeptide: Ribosomal protein uS12 methylthiotransferase RimO (454 aa).

The region spanning 19 to 129 (AKVGFVSLGC…VLAQVHEHVA (111 aa)) is the MTTase N-terminal domain. Residues cysteine 28, cysteine 64, cysteine 93, cysteine 161, cysteine 165, and cysteine 168 each contribute to the [4Fe-4S] cluster site. Residues 147–384 (LTPKHYAYLK…MAVQAKISSD (238 aa)) form the Radical SAM core domain. The TRAM domain maps to 387-453 (QVRIGQEYLI…EHDVWGVRVE (67 aa)).

The protein belongs to the methylthiotransferase family. RimO subfamily. The cofactor is [4Fe-4S] cluster.

It localises to the cytoplasm. The catalysed reaction is L-aspartate(89)-[ribosomal protein uS12]-hydrogen + (sulfur carrier)-SH + AH2 + 2 S-adenosyl-L-methionine = 3-methylsulfanyl-L-aspartate(89)-[ribosomal protein uS12]-hydrogen + (sulfur carrier)-H + 5'-deoxyadenosine + L-methionine + A + S-adenosyl-L-homocysteine + 2 H(+). Functionally, catalyzes the methylthiolation of an aspartic acid residue of ribosomal protein uS12. This is Ribosomal protein uS12 methylthiotransferase RimO from Colwellia psychrerythraea (strain 34H / ATCC BAA-681) (Vibrio psychroerythus).